A 379-amino-acid chain; its full sequence is Alanine racemase (379 aa).

The active-site Proton acceptor; specific for D-alanine is the lysine 37. An N6-(pyridoxal phosphate)lysine modification is found at lysine 37. A substrate-binding site is contributed by arginine 137. The Proton acceptor; specific for L-alanine role is filled by tyrosine 269. Substrate is bound at residue methionine 317.

It belongs to the alanine racemase family. Requires pyridoxal 5'-phosphate as cofactor.

The enzyme catalyses L-alanine = D-alanine. It participates in amino-acid biosynthesis; D-alanine biosynthesis; D-alanine from L-alanine: step 1/1. Catalyzes the interconversion of L-alanine and D-alanine. May also act on other amino acids. The polypeptide is Alanine racemase (alr) (Citrifermentans bemidjiense (strain ATCC BAA-1014 / DSM 16622 / JCM 12645 / Bem) (Geobacter bemidjiensis)).